The chain runs to 398 residues: Elongation factor Tu (398 aa).

The 198-residue stretch at 10–207 folds into the tr-type G domain; that stretch reads KPHVNIGTIG…TVDSYIPEPE (198 aa). Residues 19-26 form a G1 region; the sequence is GHVDHGKT. 19 to 26 is a binding site for GTP; the sequence is GHVDHGKT. A Mg(2+)-binding site is contributed by T26. The tract at residues 63–67 is G2; sequence GITIN. The interval 84–87 is G3; that stretch reads DAPG. Residues 84–88 and 139–142 contribute to the GTP site; these read DAPGH and NKVD. The interval 139-142 is G4; sequence NKVD. Residues 177–179 are G5; that stretch reads SAL.

The protein belongs to the TRAFAC class translation factor GTPase superfamily. Classic translation factor GTPase family. EF-Tu/EF-1A subfamily. In terms of assembly, monomer.

The protein localises to the cytoplasm. It catalyses the reaction GTP + H2O = GDP + phosphate + H(+). In terms of biological role, GTP hydrolase that promotes the GTP-dependent binding of aminoacyl-tRNA to the A-site of ribosomes during protein biosynthesis. The polypeptide is Elongation factor Tu (Streptococcus equi subsp. zooepidemicus (strain MGCS10565)).